Reading from the N-terminus, the 314-residue chain is tRNA dimethylallyltransferase (314 aa).

11 to 18 (GPTAVGKT) provides a ligand contact to ATP. A substrate-binding site is contributed by 13-18 (TAVGKT). Positions 36–39 (DSMQ) are interaction with substrate tRNA.

Belongs to the IPP transferase family. As to quaternary structure, monomer. The cofactor is Mg(2+).

It catalyses the reaction adenosine(37) in tRNA + dimethylallyl diphosphate = N(6)-dimethylallyladenosine(37) in tRNA + diphosphate. Catalyzes the transfer of a dimethylallyl group onto the adenine at position 37 in tRNAs that read codons beginning with uridine, leading to the formation of N6-(dimethylallyl)adenosine (i(6)A). The chain is tRNA dimethylallyltransferase from Bacillus anthracis.